A 293-amino-acid polypeptide reads, in one-letter code: tRNA pseudouridine synthase B (293 aa).

Asp38 (nucleophile) is an active-site residue.

It belongs to the pseudouridine synthase TruB family. Type 1 subfamily.

It carries out the reaction uridine(55) in tRNA = pseudouridine(55) in tRNA. In terms of biological role, responsible for synthesis of pseudouridine from uracil-55 in the psi GC loop of transfer RNAs. The sequence is that of tRNA pseudouridine synthase B from Microcystis aeruginosa (strain NIES-843 / IAM M-2473).